Here is a 107-residue protein sequence, read N- to C-terminus: Phosphoribosyl-ATP pyrophosphatase (107 aa).

It belongs to the PRA-PH family.

It localises to the cytoplasm. It carries out the reaction 1-(5-phospho-beta-D-ribosyl)-ATP + H2O = 1-(5-phospho-beta-D-ribosyl)-5'-AMP + diphosphate + H(+). Its pathway is amino-acid biosynthesis; L-histidine biosynthesis; L-histidine from 5-phospho-alpha-D-ribose 1-diphosphate: step 2/9. This Bacillus mycoides (strain KBAB4) (Bacillus weihenstephanensis) protein is Phosphoribosyl-ATP pyrophosphatase.